The sequence spans 373 residues: Beta sliding clamp (373 aa).

Belongs to the beta sliding clamp family. Forms a ring-shaped head-to-tail homodimer around DNA which binds and tethers DNA polymerases and other proteins to the DNA. The DNA replisome complex has a single clamp-loading complex (3 tau and 1 each of delta, delta', psi and chi subunits) which binds 3 Pol III cores (1 core on the leading strand and 2 on the lagging strand) each with a beta sliding clamp dimer. Additional proteins in the replisome are other copies of gamma, psi and chi, Ssb, DNA helicase and RNA primase.

It localises to the cytoplasm. In terms of biological role, confers DNA tethering and processivity to DNA polymerases and other proteins. Acts as a clamp, forming a ring around DNA (a reaction catalyzed by the clamp-loading complex) which diffuses in an ATP-independent manner freely and bidirectionally along dsDNA. Initially characterized for its ability to contact the catalytic subunit of DNA polymerase III (Pol III), a complex, multichain enzyme responsible for most of the replicative synthesis in bacteria; Pol III exhibits 3'-5' exonuclease proofreading activity. The beta chain is required for initiation of replication as well as for processivity of DNA replication. This chain is Beta sliding clamp (dnaN), found in Mycoplasmopsis pulmonis (strain UAB CTIP) (Mycoplasma pulmonis).